The following is a 108-amino-acid chain: Urease subunit gamma (108 aa).

The protein belongs to the urease gamma subunit family. As to quaternary structure, heterotrimer of UreA (gamma), UreB (beta) and UreC (alpha) subunits. Three heterotrimers associate to form the active enzyme.

It is found in the cytoplasm. It catalyses the reaction urea + 2 H2O + H(+) = hydrogencarbonate + 2 NH4(+). It functions in the pathway nitrogen metabolism; urea degradation; CO(2) and NH(3) from urea (urease route): step 1/1. The polypeptide is Urease subunit gamma (Haloquadratum walsbyi (strain DSM 16790 / HBSQ001)).